A 576-amino-acid polypeptide reads, in one-letter code: Nuclear/nucleolar GTPase 2 (576 aa).

Disordered stretches follow at residues 1–61 (MVKK…SNEY) and 166–186 (QDAF…EEED). Residues 16–34 (HSLDANRADGKKKTTETRS) show a composition bias toward basic and acidic residues. Basic residues predominate over residues 42–52 (KMYKTRPKRNA). Residues 206-367 (WGELYKVIDS…LIDCPGVVYQ (162 aa)) form the CP-type G domain. The DARXP motif signature appears at 224-228 (DARDP). A G4 region spans residues 254–257 (NKCD). 254-257 (NKCD) contacts GTP. Residues 283–285 (SVN) are G5. A G1 region spans residues 316 to 323 (GYPNVGKS). Residue 319–324 (NVGKSS) participates in GTP binding. The tract at residues 342-346 (GETKV) is G2. A G3 region spans residues 360–363 (DCPG). Gly-363 serves as a coordination point for GTP. Positions 502–576 (TQQQKDVPVQ…DEEDESDSAE (75 aa)) are disordered. Residues 509–530 (PVQRDFYDEKDLKDDKKAKEST) show a composition bias toward basic and acidic residues. The segment covering 531-576 (ETDAENGTDAEEDEDAVSEDGVESDSDADEDAVSENDEEDESDSAE) has biased composition (acidic residues).

The protein belongs to the TRAFAC class YlqF/YawG GTPase family. RsgA subfamily. Interacts with the 60S ribosomal proteins RPL10AA, RPL10AB and RPL10AC. Ubiquitous, with higher levels in meristematic regions.

The protein localises to the nucleus. It is found in the nucleolus. With respect to regulation, the GTPase activity is stimulated in the presence of the 60S ribosomal subunit. In terms of biological role, GTPase involved in pre-60S ribosomal subunit maturation. This Arabidopsis thaliana (Mouse-ear cress) protein is Nuclear/nucleolar GTPase 2.